The following is a 51-amino-acid chain: uncharacterized protein (51 aa).

Residues 20–42 traverse the membrane as a helical segment; the sequence is NFFSRMWNAVVFGFGAAIGASVA.

It localises to the membrane. This is an uncharacterized protein from Schizosaccharomyces pombe (strain 972 / ATCC 24843) (Fission yeast).